The following is a 653-amino-acid chain: Choline transporter-like protein 1 (653 aa).

Glycine 2 is lipidated: N-myristoyl glycine. Topologically, residues 2-29 (GCCSSASAAQSSKREWKPLEDRSCTDIP) are cytoplasmic. The helical transmembrane segment at 30–50 (WLLLFVLFCIGMGFICGFSVA) threads the bilayer. At 51–211 (TGAAARLVSG…RLISGVMTSK (161 aa)) the chain is on the mitochondrial intermembrane side. A helical transmembrane segment spans residues 212–232 (EIILGLCLLSLVLSMILMVII). Residues 233–237 (RYISR) are Cytoplasmic-facing. Residues 238-258 (VLVWILTVLVILGSLGGTGVL) form a helical membrane-spanning segment. Residues 259–287 (WWLYAKQRRSPKEAVIPEQLQIAEDNLRA) lie on the Mitochondrial intermembrane side of the membrane. A helical membrane pass occupies residues 288–308 (LLIYAISATVFTVILFLIMLV). Over 309–314 (MRKRVA) the chain is Cytoplasmic. The helical transmembrane segment at 315–335 (LTIALFHVAGKVFIHLPLLVF) threads the bilayer. The Mitochondrial intermembrane portion of the chain corresponds to 336 to 337 (QP). The chain crosses the membrane as a helical span at residues 338–358 (FWTFFALVLFWAYWIMTLLFL). The Cytoplasmic segment spans residues 359–379 (GTTGSAVQNEQGFVEYKISGP). The helical transmembrane segment at 380-400 (LQYMWWYHVVGLIWISEFILA) threads the bilayer. Residues 401–536 (CQQMTVAGAV…RVAAINTVGD (136 aa)) are Mitochondrial intermembrane-facing. A helical transmembrane segment spans residues 537–557 (FMLFLGKVLIVCSTGLAGIML). The Cytoplasmic portion of the chain corresponds to 558–565 (LNYQQDYT). A helical membrane pass occupies residues 566 to 586 (VWVLPLIIVCLFAFLVAHCFL). Over 587 to 653 (SIYEMVVDVL…RELKPMLRKR (67 aa)) the chain is Mitochondrial intermembrane.

It belongs to the CTL (choline transporter-like) family. As to expression, specifically abundant in skeletal muscle (at protein level).

It localises to the cell membrane. It is found in the mitochondrion outer membrane. It carries out the reaction choline(out) + n H(+)(in) = choline(in) + n H(+)(out). The catalysed reaction is ethanolamine(out) + n H(+)(in) = ethanolamine(in) + n H(+)(out). Functionally, choline/H+ antiporter. Also acts as a high-affinity ethanolamine/H+ antiporter, regulating the supply of extracellular ethanolamine (Etn) for the CDP-Etn pathway, redistribute intracellular Etn and balance the CDP-Cho and CDP-Etn arms of the Kennedy pathway. Involved in membrane synthesis and myelin production. In Mus musculus (Mouse), this protein is Choline transporter-like protein 1 (Slc44a1).